The chain runs to 417 residues: MMKSLANAVGAKTARACDSCVKRRARWYCAADDAFLCQSCDSLVHSANPLARRHERVRLKTASPAVVKHSNHSSASPPHEVATWHHGFTRKARTPRGSGKKNNSSIFHDLVPDISIEDQTDNYELEEQLICQVPVLDPLVSEQFLNDVVEPKIEFPMIRSGLMIEEEEDNAESCLNGFFPTDMELEEFAADVETLLGRGLDTESYAMEELGLSNSEMFKIEKDEIEEEVEEIKAMSMDIFDDDRKDVDGTVPFELSFDYESSHKTSEEEVMKNVESSGECVVKVKEEEHKNVLMLRLNYDSVISTWGGQGPPWSSGEPPERDMDISGWPAFSMVENGGESTHQKQYVGGCLPSSGFGDGGREARVSRYREKRRTRLFSKKIRYEVRKLNAEKRPRMKGRFVKRASLAAAASPLGVNY.

Zn(2+) is bound by residues Cys-17, Cys-20, Cys-40, and His-45. A B box-type; atypical zinc finger spans residues 17 to 59 (CDSCVKRRARWYCAADDAFLCQSCDSLVHSANPLARRHERVRL). The interval 63-105 (SPAVVKHSNHSSASPPHEVATWHHGFTRKARTPRGSGKKNNSS) is disordered. Positions 212-239 (LSNSEMFKIEKDEIEEEVEEIKAMSMDI) form a coiled coil. The region spanning 361–403 (REARVSRYREKRRTRLFSKKIRYEVRKLNAEKRPRMKGRFVKR) is the CCT domain.

It belongs to the CONSTANS family.

The protein localises to the nucleus. The sequence is that of Zinc finger protein CONSTANS-LIKE 16 (COL16) from Arabidopsis thaliana (Mouse-ear cress).